A 132-amino-acid chain; its full sequence is Small ribosomal subunit protein uS11 (132 aa).

The protein belongs to the universal ribosomal protein uS11 family. As to quaternary structure, part of the 30S ribosomal subunit.

In terms of biological role, located on the platform of the 30S subunit. In Sulfolobus acidocaldarius (strain ATCC 33909 / DSM 639 / JCM 8929 / NBRC 15157 / NCIMB 11770), this protein is Small ribosomal subunit protein uS11.